The following is a 65-amino-acid chain: MKWLTSFGRAVISCYKSLLLTQLRVLDRLILDHGLLRVLTCSRRVLLVQLDLVYRLAYTPTQSLA.

This is Non-structural protein 5a from Avian infectious bronchitis virus (strain Beaudette) (IBV).